Consider the following 78-residue polypeptide: Large ribosomal subunit protein bL28 (78 aa).

It belongs to the bacterial ribosomal protein bL28 family.

The sequence is that of Large ribosomal subunit protein bL28 from Legionella pneumophila (strain Paris).